A 334-amino-acid polypeptide reads, in one-letter code: Ribosomal RNA small subunit methyltransferase H (334 aa).

S-adenosyl-L-methionine is bound by residues 34-36 (GGY), Asp-52, Ala-87, Asp-100, and Gln-107.

This sequence belongs to the methyltransferase superfamily. RsmH family.

Its subcellular location is the cytoplasm. It carries out the reaction cytidine(1402) in 16S rRNA + S-adenosyl-L-methionine = N(4)-methylcytidine(1402) in 16S rRNA + S-adenosyl-L-homocysteine + H(+). Functionally, specifically methylates the N4 position of cytidine in position 1402 (C1402) of 16S rRNA. This Maricaulis maris (strain MCS10) (Caulobacter maris) protein is Ribosomal RNA small subunit methyltransferase H.